Here is a 406-residue protein sequence, read N- to C-terminus: MTFPVEKVRADFPILQREVNGLPLAYLDSAASAQKPNQVIDAESAFYRHGYAAVHRGIHTLSAQATESMENVRKQASRFINARSAEELVFVRGTTEGINLVANSWGTENIRAGDNIIISEMEHHANIVPWQMLCERKGAELRVIPLHPDGTLRLETLAALFDDRTRLLAITHVSNVLGTENPLPDMIALARQHGAKVLVDGAQAVMHHVVDVQALDCDFYVFSGHKLYGPTGIGILYVKEALLQEMPPWEGGGSMISTVSLTQGTTWAKAPWRFEAGTPNTGGIIGLGAAIDYVTSLGLDKIGDYEQMLMRYALEQLAQVPDITLYGPAQRLGVIAFNLGKHHAYDVGSFLDNYGIAVRTGHHCAMPLMAWYGVPAMCRASLAMYNTHEEVDRLVAGLTRIHRLLG.

N6-(pyridoxal phosphate)lysine is present on lysine 226. The active-site Cysteine persulfide intermediate is the cysteine 364.

Belongs to the class-V pyridoxal-phosphate-dependent aminotransferase family. Csd subfamily. As to quaternary structure, homodimer. Interacts with SufE and the SufBCD complex composed of SufB, SufC and SufD. The interaction with SufE is required to mediate the direct transfer of the sulfur atom from the S-sulfanylcysteine. Pyridoxal 5'-phosphate is required as a cofactor.

It localises to the cytoplasm. The enzyme catalyses (sulfur carrier)-H + L-cysteine = (sulfur carrier)-SH + L-alanine. It catalyses the reaction L-selenocysteine + AH2 = hydrogenselenide + L-alanine + A + H(+). It functions in the pathway cofactor biosynthesis; iron-sulfur cluster biosynthesis. Its function is as follows. Cysteine desulfurases mobilize the sulfur from L-cysteine to yield L-alanine, an essential step in sulfur metabolism for biosynthesis of a variety of sulfur-containing biomolecules. Component of the suf operon, which is activated and required under specific conditions such as oxidative stress and iron limitation. Acts as a potent selenocysteine lyase in vitro, that mobilizes selenium from L-selenocysteine. Selenocysteine lyase activity is however unsure in vivo. This Salmonella choleraesuis (strain SC-B67) protein is Cysteine desulfurase.